We begin with the raw amino-acid sequence, 341 residues long: MRKVVLITGASSGIGLALCKRLLAEDDELHLCLACRNMSKAEAVCAALLASHPTAEVTIVQVDVSNLQSVFRASKELKQRFQRLDCIYLNAGIMPNPQLNIKALFFGLFSRKVIHMFSTAEGLLTQGDKITADGLQEVFETNVFGHFILIRELEPLLCHSDNPSQLIWTSSRSARKSNFSLEDFQHSKGKEPYSSSKYATDLLSVALNRNFNQQGLYSNVACPGTALTNLTYGILPPFIWTLLMPAILLLRFFANAFTLTPYNGTEALVWLFHQKPESLNPLIKYLSATTGFGRNYIMTQKMDLDEDTAEKFYQKLLELEKHIRVTIQKTDNQARLSGSCL.

Over 1 to 229 (MRKVVLITGA…VACPGTALTN (229 aa)) the chain is Extracellular. 8–15 (TGASSGIG) serves as a coordination point for NAD(+). A glycan (N-linked (GlcNAc...) asparagine) is linked at Asn-37. Ser-171 contacts substrate. Asn-178 carries an N-linked (GlcNAc...) asparagine glycan. Tyr-193 serves as the catalytic Proton acceptor. The N-linked (GlcNAc...) asparagine glycan is linked to Asn-229. The helical transmembrane segment at 230–250 (LTYGILPPFIWTLLMPAILLL) threads the bilayer. Residues 251–341 (RFFANAFTLT…NQARLSGSCL (91 aa)) are Cytoplasmic-facing.

It belongs to the short-chain dehydrogenases/reductases (SDR) family. ERG27 subfamily. As to quaternary structure, binds to the short form of prolactin receptor. Post-translationally, phosphorylated. Highly expressed in adrenal gland, liver, lung and thymus. Expressed in breast, ovaries, pituitary gland, pregnant uterus, prostate, kidney, lymph node, small intestine, spinal cord and trachea. Weakly expressed in all other tissues tested. As to expression, expressed in eye ciliary epithelial cells and neuroendocrine cells.

The protein localises to the endoplasmic reticulum membrane. The enzyme catalyses 17beta-estradiol + NADP(+) = estrone + NADPH + H(+). It carries out the reaction a 3beta-hydroxysteroid + NADP(+) = a 3-oxosteroid + NADPH + H(+). The catalysed reaction is 3-dehydro-4alpha-methylzymosterol + NADPH + H(+) = 4alpha-methylzymosterol + NADP(+). It catalyses the reaction zymosterone + NADPH + H(+) = zymosterol + NADP(+). The enzyme catalyses 4alpha-methyl-5alpha-cholest-8-en-3-one + NADPH + H(+) = 4alpha-methyl-5alpha-cholest-8-en-3beta-ol + NADP(+). It carries out the reaction 4alpha-methyl-5alpha-cholest-7-en-3beta-ol + NADP(+) = 4alpha-methyl-5alpha-cholest-7-en-3-one + NADPH + H(+). The catalysed reaction is 5alpha-cholest-8-en-3-one + NADPH + H(+) = 5alpha-cholest-8-en-3beta-ol + NADP(+). It catalyses the reaction 5alpha-androstane-3beta,17beta-diol + NADP(+) = 17beta-hydroxy-5alpha-androstan-3-one + NADPH + H(+). The enzyme catalyses progesterone + NADPH + H(+) = 3beta-hydroxypregn-4-ene-20-one + NADP(+). Its pathway is steroid biosynthesis; estrogen biosynthesis. It functions in the pathway steroid biosynthesis; zymosterol biosynthesis; zymosterol from lanosterol: step 5/6. With respect to regulation, estradiol 17-beta-dehydrogenase and dihydrotestosterone oxidoreductase activities are selectively inhibited by 4-methyl-4-aza-5alpha-androstane derivatives, such as 17beta-[(N-Heptyl)methylamino]-4-aza-5r-androstan-3-one and 17beta-(N-Decylformamido)-4-aza-5r-androstan-3-one. Bifunctional enzyme involved in steroid-hormone metabolism and cholesterol biosynthesis. Catalyzes the NADP(H)-dependent reduction of estrogens and androgens and regulates the biological potency of these steroids. Converts estrone (E1) to a more potent estrogen, 17beta-estradiol (E2). Converts dihydrotestosterone (DHT) to its inactive form 5a-androstane-3b,17b-diol. Converts moderately progesterone to 3beta-hydroxypregn-4-ene-20-one, leading to its inactivation. Additionally, participates in the post-squalene cholesterol biosynthesis, as a 3-ketosteroid reductase. Functionally, does not have enzymatic activities toward E1 and DHT. This Homo sapiens (Human) protein is 3-keto-steroid reductase/17-beta-hydroxysteroid dehydrogenase 7 (HSD17B7).